A 164-amino-acid chain; its full sequence is Lipoprotein signal peptidase (164 aa).

The next 3 membrane-spanning stretches (helical) occupy residues 12 to 32, 70 to 90, and 102 to 122; these read WLWL…LILQ, WFFA…MYRS, and ALII…GFVV. Catalysis depends on residues D123 and D141. The chain crosses the membrane as a helical span at residues 137–157; it reads FNLADTAICVGAALIVLEGFL.

Belongs to the peptidase A8 family.

The protein resides in the cell inner membrane. It carries out the reaction Release of signal peptides from bacterial membrane prolipoproteins. Hydrolyzes -Xaa-Yaa-Zaa-|-(S,diacylglyceryl)Cys-, in which Xaa is hydrophobic (preferably Leu), and Yaa (Ala or Ser) and Zaa (Gly or Ala) have small, neutral side chains.. It functions in the pathway protein modification; lipoprotein biosynthesis (signal peptide cleavage). In terms of biological role, this protein specifically catalyzes the removal of signal peptides from prolipoproteins. The sequence is that of Lipoprotein signal peptidase from Shigella flexneri.